Consider the following 469-residue polypeptide: Probable monogalactosyldiacylglycerol synthase 2, chloroplastic (469 aa).

Residues 1-42 (MVISVATPRRSIRDAVLGGVLGAGGRQLYQPLRCAFYDGAAG) constitute a chloroplast transit peptide.

This sequence belongs to the glycosyltransferase 28 family.

Its subcellular location is the plastid. The protein resides in the chloroplast membrane. It catalyses the reaction a 1,2-diacyl-sn-glycerol + UDP-alpha-D-galactose = a 1,2-diacyl-3-O-(beta-D-galactosyl)-sn-glycerol + UDP + H(+). In terms of biological role, involved in the synthesis of the major structural component of photosynthetic membranes. The chain is Probable monogalactosyldiacylglycerol synthase 2, chloroplastic (MGD2) from Oryza sativa subsp. japonica (Rice).